Reading from the N-terminus, the 186-residue chain is NADH-quinone oxidoreductase subunit B 2 (186 aa).

Positions M1–M27 are disordered. [4Fe-4S] cluster contacts are provided by C65, C66, C130, and C160.

The protein belongs to the complex I 20 kDa subunit family. As to quaternary structure, NDH-1 is composed of 14 different subunits. Subunits NuoB, C, D, E, F, and G constitute the peripheral sector of the complex. Requires [4Fe-4S] cluster as cofactor.

The protein resides in the cell inner membrane. The enzyme catalyses a quinone + NADH + 5 H(+)(in) = a quinol + NAD(+) + 4 H(+)(out). Functionally, NDH-1 shuttles electrons from NADH, via FMN and iron-sulfur (Fe-S) centers, to quinones in the respiratory chain. The immediate electron acceptor for the enzyme in this species is believed to be ubiquinone. Couples the redox reaction to proton translocation (for every two electrons transferred, four hydrogen ions are translocated across the cytoplasmic membrane), and thus conserves the redox energy in a proton gradient. The protein is NADH-quinone oxidoreductase subunit B 2 of Rhizobium etli (strain ATCC 51251 / DSM 11541 / JCM 21823 / NBRC 15573 / CFN 42).